The sequence spans 179 residues: Large ribosomal subunit protein uL5 (179 aa).

It belongs to the universal ribosomal protein uL5 family. In terms of assembly, part of the 50S ribosomal subunit; part of the 5S rRNA/L5/L18/L25 subcomplex. Contacts the 5S rRNA and the P site tRNA. Forms a bridge to the 30S subunit in the 70S ribosome.

Functionally, this is one of the proteins that bind and probably mediate the attachment of the 5S RNA into the large ribosomal subunit, where it forms part of the central protuberance. In the 70S ribosome it contacts protein S13 of the 30S subunit (bridge B1b), connecting the 2 subunits; this bridge is implicated in subunit movement. Contacts the P site tRNA; the 5S rRNA and some of its associated proteins might help stabilize positioning of ribosome-bound tRNAs. The protein is Large ribosomal subunit protein uL5 of Rickettsia rickettsii (strain Iowa).